The sequence spans 252 residues: MSLAKRIVPCLDVHAGRVVKGVNFVNLRDAGDPVEAARAYDEAGADELVFLDISATHEERAILLDVVARVAERVFIPLTVGGGVRSLEDARKLLLSGADKVSVNSAAVRRPELIRELADHFGAQAVVLAIDARWRGDFPEVYVAGGRVPTGLHAVEWAVKGVELGAGEILLTSMDRDGTKEGYDLRLTRMVAEAVGVPVIASGGAGRMEHFLEAFQAGAEAALAASVFHFGEIPIPELKRYLAEKGVHVRLD.

Residues Asp-12 and Asp-131 contribute to the active site.

It belongs to the HisA/HisF family. Heterodimer of HisH and HisF.

It localises to the cytoplasm. The catalysed reaction is 5-[(5-phospho-1-deoxy-D-ribulos-1-ylimino)methylamino]-1-(5-phospho-beta-D-ribosyl)imidazole-4-carboxamide + L-glutamine = D-erythro-1-(imidazol-4-yl)glycerol 3-phosphate + 5-amino-1-(5-phospho-beta-D-ribosyl)imidazole-4-carboxamide + L-glutamate + H(+). It participates in amino-acid biosynthesis; L-histidine biosynthesis; L-histidine from 5-phospho-alpha-D-ribose 1-diphosphate: step 5/9. Functionally, IGPS catalyzes the conversion of PRFAR and glutamine to IGP, AICAR and glutamate. The HisF subunit catalyzes the cyclization activity that produces IGP and AICAR from PRFAR using the ammonia provided by the HisH subunit. In Thermus thermophilus (strain ATCC BAA-163 / DSM 7039 / HB27), this protein is Imidazole glycerol phosphate synthase subunit HisF.